Consider the following 62-residue polypeptide: Photosystem II reaction center protein Z (62 aa).

2 consecutive transmembrane segments (helical) span residues 8 to 28 (TLLA…VLLA) and 41 to 61 (FSGS…NSFV).

It belongs to the PsbZ family. In terms of assembly, PSII is composed of 1 copy each of membrane proteins PsbA, PsbB, PsbC, PsbD, PsbE, PsbF, PsbH, PsbI, PsbJ, PsbK, PsbL, PsbM, PsbT, PsbY, PsbZ, Psb30/Ycf12, at least 3 peripheral proteins of the oxygen-evolving complex and a large number of cofactors. It forms dimeric complexes.

It localises to the plastid. It is found in the chloroplast thylakoid membrane. Its function is as follows. May control the interaction of photosystem II (PSII) cores with the light-harvesting antenna, regulates electron flow through the 2 photosystem reaction centers. PSII is a light-driven water plastoquinone oxidoreductase, using light energy to abstract electrons from H(2)O, generating a proton gradient subsequently used for ATP formation. This Ostreococcus tauri protein is Photosystem II reaction center protein Z.